Reading from the N-terminus, the 209-residue chain is Redox-sensing transcriptional repressor Rex (209 aa).

The segment at residues 16–55 (LYYRFIQNLSLSGKQRVSSAELSEAVKVDSATIRRDFSYF) is a DNA-binding region (H-T-H motif). 90–95 (GVGNLG) serves as a coordination point for NAD(+).

It belongs to the transcriptional regulatory Rex family. As to quaternary structure, homodimer.

It is found in the cytoplasm. In terms of biological role, modulates transcription in response to changes in cellular NADH/NAD(+) redox state. The sequence is that of Redox-sensing transcriptional repressor Rex from Bacillus cytotoxicus (strain DSM 22905 / CIP 110041 / 391-98 / NVH 391-98).